A 161-amino-acid polypeptide reads, in one-letter code: Cuticle protein 16.8 (161 aa).

Position 1 is a pyrrolidone carboxylic acid (Gln-1). Positions 1-10 are enriched in pro residues; it reads QSEPAGPPQP. Disordered regions lie at residues 1 to 44 and 67 to 103; these read QSEP…YSYT and ETNEPGTKTSNPADAQIVSNAATDSYSPSPASSPAKP. In terms of domain architecture, Chitin-binding type R&amp;R spans 8–74; sequence PQPYTFSYDN…TVETNEPGTK (67 aa). Residues 67–86 show a composition bias toward polar residues; the sequence is ETNEPGTKTSNPADAQIVSN. Residues 87–103 are compositionally biased toward low complexity; the sequence is AATDSYSPSPASSPAKP.

Its function is as follows. Component of the cuticle of the tick. Binds chitin. The protein is Cuticle protein 16.8 of Ixodes ricinus (Common tick).